The following is a 692-amino-acid chain: UvrABC system protein B (692 aa).

One can recognise a Helicase ATP-binding domain in the interval Glu32 to Phe187. Position 45-52 (Gly45–Thr52) interacts with ATP. A Beta-hairpin motif is present at residues Tyr98–Val121. Positions Gln436–Ile631 constitute a Helicase C-terminal domain. In terms of domain architecture, UVR spans Lys656 to Met691.

The protein belongs to the UvrB family. Forms a heterotetramer with UvrA during the search for lesions. Interacts with UvrC in an incision complex.

Its subcellular location is the cytoplasm. Functionally, the UvrABC repair system catalyzes the recognition and processing of DNA lesions. A damage recognition complex composed of 2 UvrA and 2 UvrB subunits scans DNA for abnormalities. Upon binding of the UvrA(2)B(2) complex to a putative damaged site, the DNA wraps around one UvrB monomer. DNA wrap is dependent on ATP binding by UvrB and probably causes local melting of the DNA helix, facilitating insertion of UvrB beta-hairpin between the DNA strands. Then UvrB probes one DNA strand for the presence of a lesion. If a lesion is found the UvrA subunits dissociate and the UvrB-DNA preincision complex is formed. This complex is subsequently bound by UvrC and the second UvrB is released. If no lesion is found, the DNA wraps around the other UvrB subunit that will check the other stand for damage. This Lactococcus lactis subsp. cremoris (strain SK11) protein is UvrABC system protein B.